Here is a 392-residue protein sequence, read N- to C-terminus: Succinate--CoA ligase [ADP-forming] subunit beta (392 aa).

In terms of domain architecture, ATP-grasp spans 9-248 (KGILKQFGVA…ITEEDPLEYE (240 aa)). Residues Lys-50, 57–59 (GRG), Glu-103, Met-106, and Glu-111 each bind ATP. Positions 203 and 217 each coordinate Mg(2+). Substrate is bound by residues Asn-268 and 325 to 327 (GIV).

Belongs to the succinate/malate CoA ligase beta subunit family. As to quaternary structure, heterotetramer of two alpha and two beta subunits. Mg(2+) serves as cofactor.

It catalyses the reaction succinate + ATP + CoA = succinyl-CoA + ADP + phosphate. The catalysed reaction is GTP + succinate + CoA = succinyl-CoA + GDP + phosphate. It functions in the pathway carbohydrate metabolism; tricarboxylic acid cycle; succinate from succinyl-CoA (ligase route): step 1/1. Functionally, succinyl-CoA synthetase functions in the citric acid cycle (TCA), coupling the hydrolysis of succinyl-CoA to the synthesis of either ATP or GTP and thus represents the only step of substrate-level phosphorylation in the TCA. The beta subunit provides nucleotide specificity of the enzyme and binds the substrate succinate, while the binding sites for coenzyme A and phosphate are found in the alpha subunit. The sequence is that of Succinate--CoA ligase [ADP-forming] subunit beta from Chlorobaculum tepidum (strain ATCC 49652 / DSM 12025 / NBRC 103806 / TLS) (Chlorobium tepidum).